Reading from the N-terminus, the 353-residue chain is Protein-glutamate methylesterase/protein-glutamine glutaminase 3 (353 aa).

The Response regulatory domain occupies 3–120 (KVLIADDSAL…SSSSDMKKVA (118 aa)). The residue at position 54 (D54) is a 4-aspartylphosphate. The 196-residue stretch at 158-353 (PRPGREVTKA…AREIIRAVNR (196 aa)) folds into the CheB-type methylesterase domain. Catalysis depends on residues S173, H200, and D296.

This sequence belongs to the CheB family. Post-translationally, phosphorylated by CheA. Phosphorylation of the N-terminal regulatory domain activates the methylesterase activity.

The protein resides in the cytoplasm. The enzyme catalyses [protein]-L-glutamate 5-O-methyl ester + H2O = L-glutamyl-[protein] + methanol + H(+). It catalyses the reaction L-glutaminyl-[protein] + H2O = L-glutamyl-[protein] + NH4(+). Its function is as follows. Involved in chemotaxis. Part of a chemotaxis signal transduction system that modulates chemotaxis in response to various stimuli. Catalyzes the demethylation of specific methylglutamate residues introduced into the chemoreceptors (methyl-accepting chemotaxis proteins or MCP) by CheR. Also mediates the irreversible deamidation of specific glutamine residues to glutamic acid. The chain is Protein-glutamate methylesterase/protein-glutamine glutaminase 3 from Syntrophomonas wolfei subsp. wolfei (strain DSM 2245B / Goettingen).